Consider the following 335-residue polypeptide: Ketol-acid reductoisomerase (NADP(+)) (335 aa).

Residues 1–182 form the KARI N-terminal Rossmann domain; sequence MATIIYDNET…GATRAGVYET (182 aa). NADP(+) is bound by residues 25–28, arginine 48, serine 51, serine 53, and 83–86; these read YGSQ and DEKQ. Histidine 108 is a catalytic residue. Glycine 134 is an NADP(+) binding site. The region spanning 183–328 is the KARI C-terminal knotted domain; sequence TFREETETDL…KEIRANIPWL (146 aa). Aspartate 191, glutamate 195, glutamate 227, and glutamate 231 together coordinate Mg(2+). Serine 252 is a substrate binding site.

The protein belongs to the ketol-acid reductoisomerase family. Mg(2+) is required as a cofactor.

It catalyses the reaction (2R)-2,3-dihydroxy-3-methylbutanoate + NADP(+) = (2S)-2-acetolactate + NADPH + H(+). The catalysed reaction is (2R,3R)-2,3-dihydroxy-3-methylpentanoate + NADP(+) = (S)-2-ethyl-2-hydroxy-3-oxobutanoate + NADPH + H(+). Its pathway is amino-acid biosynthesis; L-isoleucine biosynthesis; L-isoleucine from 2-oxobutanoate: step 2/4. It functions in the pathway amino-acid biosynthesis; L-valine biosynthesis; L-valine from pyruvate: step 2/4. Its function is as follows. Involved in the biosynthesis of branched-chain amino acids (BCAA). Catalyzes an alkyl-migration followed by a ketol-acid reduction of (S)-2-acetolactate (S2AL) to yield (R)-2,3-dihydroxy-isovalerate. In the isomerase reaction, S2AL is rearranged via a Mg-dependent methyl migration to produce 3-hydroxy-3-methyl-2-ketobutyrate (HMKB). In the reductase reaction, this 2-ketoacid undergoes a metal-dependent reduction by NADPH to yield (R)-2,3-dihydroxy-isovalerate. The chain is Ketol-acid reductoisomerase (NADP(+)) from Methanosarcina acetivorans (strain ATCC 35395 / DSM 2834 / JCM 12185 / C2A).